We begin with the raw amino-acid sequence, 452 residues long: Probable mannose-6-phosphate isomerase (452 aa).

Residues Q141, H143, E168, and H295 each coordinate Zn(2+). Residue R314 is part of the active site.

Belongs to the mannose-6-phosphate isomerase type 1 family. Zn(2+) is required as a cofactor.

The protein resides in the cytoplasm. The catalysed reaction is D-mannose 6-phosphate = D-fructose 6-phosphate. Its pathway is nucleotide-sugar biosynthesis; GDP-alpha-D-mannose biosynthesis; alpha-D-mannose 1-phosphate from D-fructose 6-phosphate: step 1/2. In terms of biological role, involved in the synthesis of the GDP-mannose and dolichol-phosphate-mannose required for a number of critical mannosyl transfer reactions. This is Probable mannose-6-phosphate isomerase (mpi) from Dictyostelium discoideum (Social amoeba).